Here is a 129-residue protein sequence, read N- to C-terminus: UPF0325 protein SG1947 (129 aa).

Belongs to the UPF0325 family.

The sequence is that of UPF0325 protein SG1947 from Sodalis glossinidius (strain morsitans).